We begin with the raw amino-acid sequence, 323 residues long: Beta-ketoacyl-[acyl-carrier-protein] synthase III (323 aa).

Active-site residues include cysteine 113 and histidine 250. The tract at residues 251–255 (QANKR) is ACP-binding. The active site involves asparagine 280.

This sequence belongs to the thiolase-like superfamily. FabH family. As to quaternary structure, homodimer.

It is found in the cytoplasm. It catalyses the reaction malonyl-[ACP] + acetyl-CoA + H(+) = 3-oxobutanoyl-[ACP] + CO2 + CoA. It functions in the pathway lipid metabolism; fatty acid biosynthesis. Catalyzes the condensation reaction of fatty acid synthesis by the addition to an acyl acceptor of two carbons from malonyl-ACP. Catalyzes the first condensation reaction which initiates fatty acid synthesis and may therefore play a role in governing the total rate of fatty acid production. Possesses both acetoacetyl-ACP synthase and acetyl transacylase activities. Its substrate specificity determines the biosynthesis of branched-chain and/or straight-chain of fatty acids. In Mesorhizobium japonicum (strain LMG 29417 / CECT 9101 / MAFF 303099) (Mesorhizobium loti (strain MAFF 303099)), this protein is Beta-ketoacyl-[acyl-carrier-protein] synthase III.